The sequence spans 179 residues: Large ribosomal subunit protein uL5 (179 aa).

The protein belongs to the universal ribosomal protein uL5 family. Part of the 50S ribosomal subunit; part of the 5S rRNA/L5/L18/L25 subcomplex. Contacts the 5S rRNA and the P site tRNA. Forms a bridge to the 30S subunit in the 70S ribosome.

Functionally, this is one of the proteins that bind and probably mediate the attachment of the 5S RNA into the large ribosomal subunit, where it forms part of the central protuberance. In the 70S ribosome it contacts protein S13 of the 30S subunit (bridge B1b), connecting the 2 subunits; this bridge is implicated in subunit movement. Contacts the P site tRNA; the 5S rRNA and some of its associated proteins might help stabilize positioning of ribosome-bound tRNAs. In Salmonella arizonae (strain ATCC BAA-731 / CDC346-86 / RSK2980), this protein is Large ribosomal subunit protein uL5.